We begin with the raw amino-acid sequence, 171 residues long: MRLSYRLVSGLLVLASIVGMSFALYLEHVKGLEPCPLCIFQRVGLMAMGFVALIAFLHNPVSNAIKRFYAFLAGVAILWSVGVAGRHVWLQHLPPDQVPSCGPGLNYLIDALPMKTVLQEVLSGSGECAAIDWTFLGQSLPVWSLAYFLLLLLVCLWQLFRFYPVFKTAKK.

Topologically, residues 1-8 (MRLSYRLV) are cytoplasmic. A helical transmembrane segment spans residues 9-25 (SGLLVLASIVGMSFALY). At 26–43 (LEHVKGLEPCPLCIFQRV) the chain is on the periplasmic side. Cysteines 35 and 38 form a disulfide. The chain crosses the membrane as a helical span at residues 44–60 (GLMAMGFVALIAFLHNP). Over 61-67 (VSNAIKR) the chain is Cytoplasmic. A helical membrane pass occupies residues 68 to 85 (FYAFLAGVAILWSVGVAG). The Periplasmic segment spans residues 86-142 (RHVWLQHLPPDQVPSCGPGLNYLIDALPMKTVLQEVLSGSGECAAIDWTFLGQSLPV). Cysteines 101 and 128 form a disulfide. The chain crosses the membrane as a helical span at residues 143 to 161 (WSLAYFLLLLLVCLWQLFR). The Cytoplasmic portion of the chain corresponds to 162-171 (FYPVFKTAKK).

Belongs to the DsbB family.

It localises to the cell inner membrane. Its function is as follows. Required for disulfide bond formation in some periplasmic proteins. Acts by oxidizing the DsbA protein. This is Disulfide bond formation protein B from Acinetobacter baumannii (strain ATCC 17978 / DSM 105126 / CIP 53.77 / LMG 1025 / NCDC KC755 / 5377).